The sequence spans 250 residues: Putative (5-formylfuran-3-yl)methyl phosphate synthase (250 aa).

The active-site Schiff-base intermediate with substrate is Lys29. Lys87 functions as the Proton acceptor in the catalytic mechanism.

This sequence belongs to the MfnB family.

The catalysed reaction is 2 D-glyceraldehyde 3-phosphate = 4-(hydroxymethyl)-2-furancarboxaldehyde phosphate + phosphate + 2 H2O. Functionally, catalyzes the formation of 4-(hydroxymethyl)-2-furancarboxaldehyde phosphate (4-HFC-P) from two molecules of glyceraldehyde-3-P (GA-3-P). The protein is Putative (5-formylfuran-3-yl)methyl phosphate synthase of Streptomyces griseus subsp. griseus (strain JCM 4626 / CBS 651.72 / NBRC 13350 / KCC S-0626 / ISP 5235).